The following is a 141-amino-acid chain: Large ribosomal subunit protein uL13 (141 aa).

It belongs to the universal ribosomal protein uL13 family. Part of the 50S ribosomal subunit.

In terms of biological role, this protein is one of the early assembly proteins of the 50S ribosomal subunit, although it is not seen to bind rRNA by itself. It is important during the early stages of 50S assembly. The protein is Large ribosomal subunit protein uL13 of Helicobacter pylori (strain G27).